We begin with the raw amino-acid sequence, 222 residues long: tRNA (guanine-N(1)-)-methyltransferase (222 aa).

S-adenosyl-L-methionine contacts are provided by residues Gly-112 and Ile-132–Leu-137.

The protein belongs to the RNA methyltransferase TrmD family. In terms of assembly, homodimer.

The protein localises to the cytoplasm. It carries out the reaction guanosine(37) in tRNA + S-adenosyl-L-methionine = N(1)-methylguanosine(37) in tRNA + S-adenosyl-L-homocysteine + H(+). Its function is as follows. Specifically methylates guanosine-37 in various tRNAs. The protein is tRNA (guanine-N(1)-)-methyltransferase of Azobacteroides pseudotrichonymphae genomovar. CFP2.